The primary structure comprises 321 residues: GDP-L-fucose synthase (321 aa).

Residue 14–20 participates in NADP(+) binding; sequence GGSGLVG. The Proton donor/acceptor role is filled by tyrosine 143. NADP(+)-binding positions include lysine 147, 170-173, and histidine 186; that span reads PTNV. 4 residues coordinate substrate: lysine 194, tryptophan 208, arginine 215, and aspartate 277.

Belongs to the NAD(P)-dependent epimerase/dehydratase family. Fucose synthase subfamily. In terms of assembly, homodimer.

The catalysed reaction is GDP-beta-L-fucose + NADP(+) = GDP-4-dehydro-alpha-D-rhamnose + NADPH + H(+). The protein operates within nucleotide-sugar biosynthesis; GDP-L-fucose biosynthesis via de novo pathway; GDP-L-fucose from GDP-alpha-D-mannose: step 2/2. Functionally, catalyzes the two-step NADP-dependent conversion of GDP-4-dehydro-6-deoxy-D-mannose to GDP-fucose, involving an epimerase and a reductase reaction. This is GDP-L-fucose synthase (GFUS) from Pongo abelii (Sumatran orangutan).